A 280-amino-acid polypeptide reads, in one-letter code: MGRAELLGGNMSTQDPSELWGRADGGTDLLQDLGWYHGNLTRHAAEALLLSNGRDGSYLLRDSNEQTGLYSLSVRAKDSVKHFHVEYTGYSFKFGFNEYSSLKDFVKHFANQPLIGSETGTLMVLKHPYPREVEEPCIYESVRVHTAMQTGRTENDLVPTAPSLGTKEGYLTKQGGLVKTWKTRWFTLQRNELKYFKDQMSPEPIRILDLTECSAVQFDYSQERVNCFCLVFPFRTFYLCAKTGVEADEWIKILRWKLSKIRKQLDQGEDTVRSRSFIFK.

An SH2 domain is found at 35 to 129; it reads WYHGNLTRHA…GTLMVLKHPY (95 aa). Y139 is subject to Phosphotyrosine. S141 is subject to Phosphoserine. Residues 164 to 259 enclose the PH domain; that stretch reads LGTKEGYLTK…WIKILRWKLS (96 aa).

Interacts with PtdIns(3,4,5)P3 and PLCG2. In terms of processing, phosphorylated on tyrosine residues.

It localises to the cytoplasm. Its subcellular location is the membrane. Its function is as follows. May act as a B-cell-associated adapter that regulates B-cell antigen receptor (BCR)-signaling downstream of PI3K. The polypeptide is Dual adapter for phosphotyrosine and 3-phosphotyrosine and 3-phosphoinositide (Dapp1) (Mus musculus (Mouse)).